The primary structure comprises 299 residues: uncharacterized protein (299 aa).

The segment covering 1-10 has biased composition (polar residues); the sequence is MTSIIQSPPL. Disordered regions lie at residues 1-30, 54-89, and 148-212; these read MTSI…NNNN, KLNN…INNN, and QDYT…SDYV. Residues 56 to 89 are compositionally biased toward low complexity; that stretch reads NNNNNNNNNNNNNNNNNNNNNNNNSSSNNNINNN. Acidic residues-rich tracts occupy residues 150–169 and 177–212; these read YTDE…DEEE and ECEE…SDYV.

This is an uncharacterized protein from Dictyostelium discoideum (Social amoeba).